A 957-amino-acid chain; its full sequence is Protein translocase subunit SecA (957 aa).

Residues Gln-87, 105–109 (GEGKT), and Asp-512 each bind ATP. The segment at 924 to 957 (AAPAQAPSKSKRSAGRNDPCPCGSGQKYKKCCGK) is disordered. 4 residues coordinate Zn(2+): Cys-943, Cys-945, Cys-954, and Cys-955.

The protein belongs to the SecA family. Monomer and homodimer. Part of the essential Sec protein translocation apparatus which comprises SecA, SecYEG and auxiliary proteins SecDF-YajC and YidC. Zn(2+) serves as cofactor.

It is found in the cell inner membrane. The protein localises to the cytoplasm. The enzyme catalyses ATP + H2O + cellular proteinSide 1 = ADP + phosphate + cellular proteinSide 2.. In terms of biological role, part of the Sec protein translocase complex. Interacts with the SecYEG preprotein conducting channel. Has a central role in coupling the hydrolysis of ATP to the transfer of proteins into and across the cell membrane, serving as an ATP-driven molecular motor driving the stepwise translocation of polypeptide chains across the membrane. In Geobacter sp. (strain M21), this protein is Protein translocase subunit SecA.